Consider the following 585-residue polypeptide: A-type ATP synthase subunit A (585 aa).

Residue glycine 231–threonine 238 participates in ATP binding.

Belongs to the ATPase alpha/beta chains family. In terms of assembly, has multiple subunits with at least A(3), B(3), C, D, E, F, H, I and proteolipid K(x).

Its subcellular location is the cell membrane. The catalysed reaction is ATP + H2O + 4 H(+)(in) = ADP + phosphate + 5 H(+)(out). Produces ATP from ADP in the presence of a proton gradient across the membrane. The archaeal alpha chain is a catalytic subunit. In terms of biological role, component of the A-type ATP synthase that produces ATP from ADP in the presence of a proton gradient across the membrane. The A chain is the catalytic subunit. This is A-type ATP synthase subunit A from Thermococcus sp. (strain KI).